A 173-amino-acid chain; its full sequence is Peptide deformylase (173 aa).

Cysteine 91 and histidine 133 together coordinate Fe cation. Glutamate 134 is an active-site residue. A Fe cation-binding site is contributed by histidine 137.

It belongs to the polypeptide deformylase family. Requires Fe(2+) as cofactor.

The enzyme catalyses N-terminal N-formyl-L-methionyl-[peptide] + H2O = N-terminal L-methionyl-[peptide] + formate. Functionally, removes the formyl group from the N-terminal Met of newly synthesized proteins. Requires at least a dipeptide for an efficient rate of reaction. N-terminal L-methionine is a prerequisite for activity but the enzyme has broad specificity at other positions. The polypeptide is Peptide deformylase (Buchnera aphidicola subsp. Acyrthosiphon pisum (strain 5A)).